The chain runs to 324 residues: Beta-ketoacyl-[acyl-carrier-protein] synthase III (324 aa).

Residues C112 and H249 contribute to the active site. The ACP-binding stretch occupies residues 250–254 (QANRR). The active site involves N279.

It belongs to the thiolase-like superfamily. FabH family. Homodimer.

The protein localises to the cytoplasm. It catalyses the reaction malonyl-[ACP] + acetyl-CoA + H(+) = 3-oxobutanoyl-[ACP] + CO2 + CoA. It functions in the pathway lipid metabolism; fatty acid biosynthesis. Functionally, catalyzes the condensation reaction of fatty acid synthesis by the addition to an acyl acceptor of two carbons from malonyl-ACP. Catalyzes the first condensation reaction which initiates fatty acid synthesis and may therefore play a role in governing the total rate of fatty acid production. Possesses both acetoacetyl-ACP synthase and acetyl transacylase activities. Its substrate specificity determines the biosynthesis of branched-chain and/or straight-chain of fatty acids. The protein is Beta-ketoacyl-[acyl-carrier-protein] synthase III of Streptococcus equi subsp. equi (strain 4047).